A 304-amino-acid polypeptide reads, in one-letter code: Recombination-associated protein RdgC (304 aa).

This sequence belongs to the RdgC family.

It localises to the cytoplasm. It is found in the nucleoid. Functionally, may be involved in recombination. The sequence is that of Recombination-associated protein RdgC from Shewanella putrefaciens (strain CN-32 / ATCC BAA-453).